A 268-amino-acid chain; its full sequence is Bidirectional sugar transporter N3 (268 aa).

The Extracellular segment spans residues 1-7 (MAISHNT). A helical membrane pass occupies residues 8 to 28 (LAFTFGMLGNVISFLVFLAPI). Positions 10–96 (FTFGMLGNVI…ILYIIYAPRD (87 aa)) constitute a MtN3/slv 1 domain. Topologically, residues 29 to 42 (STFYRIYKKKSTEG) are cytoplasmic. Residues 43-63 (FQSLPYLVALFSSMLWLYYAL) traverse the membrane as a helical segment. At 64-70 (LKKDAFL) the chain is on the extracellular side. A helical transmembrane segment spans residues 71 to 91 (LITINSFGCVVETIYIILYII). The Cytoplasmic segment spans residues 92–103 (YAPRDARNLTFK). The chain crosses the membrane as a helical span at residues 104 to 124 (LLSAMNVGSFALILIVTNYAV). Over 125–131 (HGPLRVQ) the chain is Extracellular. A MtN3/slv 2 domain is found at 131–214 (QVLGWVCVSL…QMLLYAIYRN (84 aa)). A helical membrane pass occupies residues 132 to 152 (VLGWVCVSLSVSVFAAPLSIV). The Cytoplasmic segment spans residues 153 to 165 (AQVVRTKSVEFMP). The chain crosses the membrane as a helical span at residues 166–186 (FNLSFTLTLSATMWFGYGFFL). The Extracellular portion of the chain corresponds to 187 to 190 (KDIC). A helical membrane pass occupies residues 191-211 (IXLPNVLGXVLGLLQMLLYAI). At 212-268 (YRNGGEKAMKKEKKAPIEPPKSIVIETQLEKIEQEKKNKDDDNEEKDKSEEPIGCGV) the chain is on the cytoplasmic side. A coiled-coil region spans residues 234–262 (IVIETQLEKIEQEKKNKDDDNEEKDKSEE). Residues 243–262 (IEQEKKNKDDDNEEKDKSEE) show a composition bias toward basic and acidic residues. The interval 243–268 (IEQEKKNKDDDNEEKDKSEEPIGCGV) is disordered.

Belongs to the SWEET sugar transporter family. As to quaternary structure, forms homooligomers and/or heterooligomers.

The protein localises to the cell membrane. In terms of biological role, mediates both low-affinity uptake and efflux of sugar across the plasma membrane. The protein is Bidirectional sugar transporter N3 (N3) of Medicago truncatula (Barrel medic).